We begin with the raw amino-acid sequence, 148 residues long: Small ribosomal subunit protein uS7c (148 aa).

Belongs to the universal ribosomal protein uS7 family. As to quaternary structure, part of the 30S ribosomal subunit.

Its subcellular location is the plastid. The protein resides in the chloroplast. Functionally, one of the primary rRNA binding proteins, it binds directly to 16S rRNA where it nucleates assembly of the head domain of the 30S subunit. The sequence is that of Small ribosomal subunit protein uS7c (rps7) from Cyanidioschyzon merolae (strain NIES-3377 / 10D) (Unicellular red alga).